Reading from the N-terminus, the 500-residue chain is Protein DETOXIFICATION 24 (500 aa).

A disordered region spans residues 1 to 20; that stretch reads MSTQEEMEERLLREGSDAEG. 12 helical membrane-spanning segments follow: residues 48-67, 72-92, 124-144, 160-180, 188-208, 225-245, 266-286, 298-318, 342-362, 384-404, 411-431, and 441-461; these read SSLF…AFIG, LGLA…YGLM, IVDM…GPIL, IYPW…IQMY, AIVG…TWWC, VGSW…WCPF, ISSG…VLMA, AFSI…GFLG, VILT…LAFC, VILA…GVAV, IVAV…GLIL, and GLWS…CYII.

This sequence belongs to the multi antimicrobial extrusion (MATE) (TC 2.A.66.1) family.

It is found in the membrane. The sequence is that of Protein DETOXIFICATION 24 from Arabidopsis thaliana (Mouse-ear cress).